Here is a 107-residue protein sequence, read N- to C-terminus: U1-lycotoxin-Ls1w (107 aa).

An N-terminal signal peptide occupies residues 1–20; the sequence is MLKVLVVVALLVTLISYSSS. A propeptide spanning residues 21–41 is cleaved from the precursor; that stretch reads EGIDDLEADELLSLMANEQTR. Intrachain disulfides connect C44-C59, C51-C68, C58-C86, and C70-C84.

Belongs to the neurotoxin 19 (CSTX) family. 04 (U1-Lctx) subfamily. As to expression, expressed by the venom gland.

It is found in the secreted. The protein is U1-lycotoxin-Ls1w of Lycosa singoriensis (Wolf spider).